Consider the following 264-residue polypeptide: Phosphoinositide-3-kinase-interacting protein 1 (264 aa).

The N-terminal stretch at 1–21 (MLLAWVHTFLLSNMLLAEAYG) is a signal peptide. At 22 to 170 (SGGCFWDNGH…SKEKKDLGTL (149 aa)) the chain is on the extracellular side. One can recognise a Kringle domain in the interval 24-101 (GCFWDNGHLY…EKRPCEDVSC (78 aa)). 3 disulfides stabilise this stretch: Cys25–Cys101, Cys46–Cys82, and Cys70–Cys96. The interval 94-129 (RPCEDVSCPETTSQAPPPSSAMELEEKSGAPGDKEA) is disordered. Basic and acidic residues predominate over residues 117-129 (LEEKSGAPGDKEA). The chain crosses the membrane as a helical span at residues 171–191 (GYVLGITMMVIILAIGAGIIV). Residues 192–264 (GYTYKRGKDL…LTGQAGTPGA (73 aa)) lie on the Cytoplasmic side of the membrane.

It localises to the cell membrane. Its function is as follows. Negative regulator of hepatic phosphatidylinositol 3-kinase (PI3K) activity. This Mus musculus (Mouse) protein is Phosphoinositide-3-kinase-interacting protein 1 (Pik3ip1).